The following is a 542-amino-acid chain: Sodium/hydrogen exchanger 8 (542 aa).

11 consecutive transmembrane segments (helical) span residues 55 to 75, 79 to 99, 118 to 138, 151 to 171, 186 to 206, 256 to 276, 306 to 326, 349 to 369, 374 to 394, 412 to 432, and 446 to 466; these read EQSS…CIIL, LIRY…LGIL, EEMF…IFES, IGSI…VVGG, NMTD…VATI, TFLQ…ALGT, AYLP…VFAF, LVLF…NFFR, TPKM…PYAL, TTIV…MPLI, and NKKD…ESEH. T471 carries the phosphothreonine modification. Residues S532 and S534 each carry the phosphoserine modification.

Belongs to the monovalent cation:proton antiporter 1 (CPA1) transporter (TC 2.A.36) family.

The protein resides in the golgi apparatus membrane. It localises to the golgi apparatus. It is found in the trans-Golgi network membrane. Its subcellular location is the endosome. The protein localises to the multivesicular body membrane. The protein resides in the apical cell membrane. It localises to the cytoplasmic vesicle. It is found in the secretory vesicle. Its subcellular location is the acrosome. The enzyme catalyses Na(+)(in) + H(+)(out) = Na(+)(out) + H(+)(in). Na(+)/H(+) antiporter. Mediates the electoneutral exchange of intracellular H(+) ions for extracellular Na(+) in 1:1 stoichiometry. Acts as an Na(+)/H(+) exchanger in the trans-Golgi. Contributes to the regulation of pH regulation of Golgi apparatus, and consequently, in protein trafficking and endosomal morphology. In germ cells, plays a crucial role in acrosome biogenesis and sperm development, probably by playing a role in the fusion of the Golgi-derived vesicles that form the acrosomal cap. Can also be active at the cell surface of specialized cells. In the small intestine, at the cell membrane, plays a major physiological role in transepithelial absorption of Na(+) and regulates intracellular pH homeostasis of intestinal epithelial cells. Acts as an important regulator of mucosal integrity in the intestine and in the stomach, could mediate the pH fluctuation necessary for mucin exocytosis or assist membrane trafficking of other proteins. Plays a role in photoreceptor survival and in the maintenance of intracellular pH homeostasis in retinal pigment epithelium (RPE cells). The protein is Sodium/hydrogen exchanger 8 (SLC9A8) of Macaca fascicularis (Crab-eating macaque).